The sequence spans 192 residues: dTTP/UTP pyrophosphatase (192 aa).

The active-site Proton acceptor is the aspartate 72.

Belongs to the Maf family. YhdE subfamily. A divalent metal cation serves as cofactor.

It is found in the cytoplasm. The catalysed reaction is dTTP + H2O = dTMP + diphosphate + H(+). It catalyses the reaction UTP + H2O = UMP + diphosphate + H(+). In terms of biological role, nucleoside triphosphate pyrophosphatase that hydrolyzes dTTP and UTP. May have a dual role in cell division arrest and in preventing the incorporation of modified nucleotides into cellular nucleic acids. The polypeptide is dTTP/UTP pyrophosphatase (Geobacter metallireducens (strain ATCC 53774 / DSM 7210 / GS-15)).